We begin with the raw amino-acid sequence, 70 residues long: Small ribosomal subunit protein bS21 (70 aa).

Positions 48–61 are enriched in basic residues; the sequence is KLAAAVKRQSKRLR. A disordered region spans residues 48–70; sequence KLAAAVKRQSKRLRSQQLPPKMY.

It belongs to the bacterial ribosomal protein bS21 family.

The protein is Small ribosomal subunit protein bS21 of Thiobacillus denitrificans (strain ATCC 25259 / T1).